The following is a 191-amino-acid chain: Peptidyl-tRNA hydrolase (191 aa).

A tRNA-binding site is contributed by Y16. The active-site Proton acceptor is the H21. F66, N68, and N114 together coordinate tRNA.

This sequence belongs to the PTH family. Monomer.

The protein localises to the cytoplasm. It catalyses the reaction an N-acyl-L-alpha-aminoacyl-tRNA + H2O = an N-acyl-L-amino acid + a tRNA + H(+). Hydrolyzes ribosome-free peptidyl-tRNAs (with 1 or more amino acids incorporated), which drop off the ribosome during protein synthesis, or as a result of ribosome stalling. In terms of biological role, catalyzes the release of premature peptidyl moieties from peptidyl-tRNA molecules trapped in stalled 50S ribosomal subunits, and thus maintains levels of free tRNAs and 50S ribosomes. This is Peptidyl-tRNA hydrolase from Geotalea daltonii (strain DSM 22248 / JCM 15807 / FRC-32) (Geobacter daltonii).